The primary structure comprises 413 residues: Peptide chain release factor 1, mitochondrial (413 aa).

N5-methylglutamine is present on Gln287. The interval Arg335–Asn363 is disordered.

This sequence belongs to the prokaryotic/mitochondrial release factor family. Post-translationally, methylation of glutamine in the GGQ triplet is conserved from bacteria to mammals. N5-methylated on Gln-287 by MTQ1.

It is found in the mitochondrion. Its function is as follows. Mitochondrial peptide chain release factor that directs the termination of translation in response to the peptide chain termination codons UAA and UAG. This Saccharomyces cerevisiae (strain ATCC 204508 / S288c) (Baker's yeast) protein is Peptide chain release factor 1, mitochondrial (MRF1).